The chain runs to 267 residues: Low affinity immunoglobulin gamma Fc region receptor III (267 aa).

A signal peptide spans 1–36 (MTLETQMFQNAHSGSQWLLPPLTMLLLFAFADRQTA). The Extracellular portion of the chain corresponds to 37–221 (NLPKAVVKRD…STSSLVWFHA (185 aa)). Ig-like C2-type domains are found at residues 39 to 121 (PKAV…EVIS) and 122 to 204 (DWLL…VTIT). 2 disulfides stabilise this stretch: Cys62/Cys104 and Cys143/Cys187. N-linked (GlcNAc...) asparagine glycans are attached at residues Asn70, Asn78, Asn97, Asn171, and Asn178. Residues 222-241 (AFCLVMCLLFAVDTGLYFCV) form a helical membrane-spanning segment. At 242 to 267 (RRNLQTSGEDWRKSLSVGKYKAPQDK) the chain is on the cytoplasmic side.

In terms of assembly, may form multisubunit complex with other heteroproteins. This association is required for efficient cell-surface expression. Does not associate with CD3 zeta. In terms of tissue distribution, expressed on natural killer cells and macrophages.

Its subcellular location is the cell membrane. Its function is as follows. Receptor for the Fc region of complexed immunoglobulins gamma. Low affinity receptor which binds to IgG1, IgG2a and IgG2b. Mediates neutrophil activation by IgG complexes redundantly with Fcgr4. This Rattus norvegicus (Rat) protein is Low affinity immunoglobulin gamma Fc region receptor III (Fcgr3).